The chain runs to 1374 residues: DNA-directed RNA polymerase subunit beta (1374 aa).

It belongs to the RNA polymerase beta chain family. The RNAP catalytic core consists of 2 alpha, 1 beta, 1 beta' and 1 omega subunit. When a sigma factor is associated with the core the holoenzyme is formed, which can initiate transcription.

It catalyses the reaction RNA(n) + a ribonucleoside 5'-triphosphate = RNA(n+1) + diphosphate. Functionally, DNA-dependent RNA polymerase catalyzes the transcription of DNA into RNA using the four ribonucleoside triphosphates as substrates. In Methylobacterium radiotolerans (strain ATCC 27329 / DSM 1819 / JCM 2831 / NBRC 15690 / NCIMB 10815 / 0-1), this protein is DNA-directed RNA polymerase subunit beta.